Consider the following 481-residue polypeptide: Glutamine synthetase (481 aa).

Positions 22 to 106 constitute a GS beta-grasp domain; it reads NEVEFVDFRF…VFCDVYDVYK (85 aa). Residues 114–481 form the GS catalytic domain; that stretch reads PRSIAKKALK…PFEFITTYSC (368 aa). Mg(2+) is bound by residues Glu139, Glu141, Glu223, and Glu230. Residues 274–275 and Gly275 each bind L-glutamate; that span reads NG. His279 serves as a coordination point for Mg(2+). ATP-binding positions include 281–283 and Ser283; that span reads HVS. L-glutamate is bound by residues Arg331, Glu337, and Arg349. ATP is bound by residues Arg349 and Arg354. Glu367 serves as a coordination point for Mg(2+). Position 369 (Arg369) interacts with L-glutamate.

This sequence belongs to the glutamine synthetase family. Oligomer of 12 subunits arranged in the form of two hexameric ring. Requires Mg(2+) as cofactor.

Its subcellular location is the cytoplasm. The enzyme catalyses L-glutamate + NH4(+) + ATP = L-glutamine + ADP + phosphate + H(+). Its activity is regulated as follows. The activity of this enzyme could be controlled by adenylation under conditions of abundant glutamine. Catalyzes the ATP-dependent biosynthesis of glutamine from glutamate and ammonia. This Helicobacter pylori (strain J99 / ATCC 700824) (Campylobacter pylori J99) protein is Glutamine synthetase.